The sequence spans 519 residues: General transcription factor 3C polypeptide 5 (519 aa).

Position 2 is an N-acetylalanine (Ala-2). Positions 465–519 are disordered; it reads ALFSSSAKADGGKEQLTYESGEDEEDEEEEEEEEEDFKPSDGSENEMETEILDYV. 2 stretches are compositionally biased toward acidic residues: residues 484 to 500 and 507 to 519; these read SGED…EEED and SENE…LDYV.

The protein belongs to the TFIIIC subunit 5 family. Part of the TFIIIC subcomplex TFIIIC2, consisting of six subunits, GTF3C1, GTF3C2, GTF3C3, GTF3C4, GTF3C5 and GTF3C6. Interacts with BRF1, GTF3C6 and TBP.

It is found in the nucleus. In terms of biological role, involved in RNA polymerase III-mediated transcription. Integral, tightly associated component of the DNA-binding TFIIIC2 subcomplex that directly binds tRNA and virus-associated RNA promoters. This chain is General transcription factor 3C polypeptide 5 (GTF3C5), found in Homo sapiens (Human).